The chain runs to 259 residues: uncharacterized protein (259 aa).

The protein belongs to the chlamydial CPn_0128/CT_035/TC_0305 family.

This is an uncharacterized protein from Chlamydia muridarum (strain MoPn / Nigg).